Here is an 84-residue protein sequence, read N- to C-terminus: Hydramacin-1 (84 aa).

An N-terminal signal peptide occupies residues 1 to 24 (MRTVVFFILVSIFLVALKPTGTQA). The residue at position 25 (Gln-25) is a Pyrrolidone carboxylic acid. Cystine bridges form between Cys-29–Cys-72, Cys-36–Cys-65, Cys-51–Cys-81, and Cys-55–Cys-83.

In terms of tissue distribution, expressed in the endodermal epithelium.

It is found in the secreted. The protein localises to the target cell membrane. Cationic antimicrobial peptide potently active against Gram-positive and Gram-negative bacteria including multi-resistant human pathogenic strains. Is not active against the Gram-positive Coccus species, Gram-negative non-fermentation species and against the fungus C.albicans. It leads to aggregation of bacteria as an initial step of its bactericidal mechanism. Aggregated cells are connected via electron-dense contacts and adopt a thorn apple-like morphology. Hydramycin contains a belt of positively charged residues that separate two hydrophobic areas. This structure may explain the observed aggregation of bacteria, since each of these areas can immerse into the outer leaflets of the membranes of two individual bacteria. Is able to permeabilize membranes of viable bacteria at low and neutral pH values, but no pore-forming activity is not detected. The sequence is that of Hydramacin-1 from Hydra vulgaris (Hydra).